A 67-amino-acid polypeptide reads, in one-letter code: Retron Se72 cold shock-like protein (67 aa).

In terms of domain architecture, CSD spans 1-66 (MENGFVNFYD…KGFKAVAIQK (66 aa)).

Probable cold shock-like component of antiviral defense system retron Se72, composed of a non-coding RNA (ncRNA), a reverse transcriptase (RT) and this protein. Expression of retron Se72 confers protection against bacteriophage lambda. At multiplicity of infection (MOI) of 0.02 cultures slow growth when infected with lambda but do not collapse, at MOI 2 cultures enter growth stasis. This Salmonella heidelberg (strain 579083-10) protein is Retron Se72 cold shock-like protein.